We begin with the raw amino-acid sequence, 639 residues long: Serine/threonine-protein phosphatase 2B catalytic subunit A1 (639 aa).

Fe cation-binding residues include Asp-120, His-122, and Asp-148. Zn(2+)-binding residues include Asp-148 and Asn-180. His-181 acts as the Proton donor in catalysis. The Zn(2+) site is built by His-229 and His-311. Residues Lys-494–Pro-503 are compositionally biased toward basic and acidic residues. The tract at residues Lys-494–Asn-602 is disordered. Composition is skewed to low complexity over residues Ala-515 to Pro-527 and Thr-546 to Pro-572.

Belongs to the PPP phosphatase family. PP-2B subfamily. As to quaternary structure, composed of two components (A and B), the A component is the catalytic subunit and the B component confers calcium sensitivity. It depends on Fe(3+) as a cofactor. Requires Zn(2+) as cofactor.

The enzyme catalyses O-phospho-L-seryl-[protein] + H2O = L-seryl-[protein] + phosphate. The catalysed reaction is O-phospho-L-threonyl-[protein] + H2O = L-threonyl-[protein] + phosphate. Calcium-dependent, calmodulin-stimulated protein phosphatase. This subunit may have a role in the calmodulin activation of calcineurin. The protein is Serine/threonine-protein phosphatase 2B catalytic subunit A1 (CNA1) of Cryptococcus neoformans var. grubii serotype A (strain H99 / ATCC 208821 / CBS 10515 / FGSC 9487) (Filobasidiella neoformans var. grubii).